We begin with the raw amino-acid sequence, 1171 residues long: Myosin-B/C (1171 aa).

The Myosin motor domain occupies 105–780 (ETVDDIGYLP…AAKELSILQR (676 aa)). 199 to 206 (GESGAGKT) serves as a coordination point for ATP. The interval 671–681 (AHFIRCLKPNE) is actin-binding. Residues 810-1171 (IHFLTRLESN…CFEACAPDRP (362 aa)) are tail.

The protein belongs to the TRAFAC class myosin-kinesin ATPase superfamily. Myosin family.

The protein localises to the cytoplasm. Functionally, myosins are actin-based motor molecules with ATPase activity. Unconventional myosins serve in intracellular movements. Their highly divergent tails are presumed to bind to membranous compartments, which would be moved relative to actin filaments. Plays a role in proper daughter cell budding and separation. The chain is Myosin-B/C from Toxoplasma gondii.